A 431-amino-acid polypeptide reads, in one-letter code: Glucose-1-phosphate adenylyltransferase (431 aa).

Lys39 provides a ligand contact to beta-D-fructose 1,6-bisphosphate. AMP-binding residues include Arg40, His46, and Arg52. Tyr114 provides a ligand contact to alpha-D-glucose 1-phosphate. Arg130 contributes to the AMP binding site. Residues Gly179, 194–195 (EK), and Ser212 each bind alpha-D-glucose 1-phosphate. Arg386 provides a ligand contact to AMP. Beta-D-fructose 1,6-bisphosphate-binding positions include 419–423 (REMLR) and 429–431 (QER).

It belongs to the bacterial/plant glucose-1-phosphate adenylyltransferase family. In terms of assembly, homotetramer.

The enzyme catalyses alpha-D-glucose 1-phosphate + ATP + H(+) = ADP-alpha-D-glucose + diphosphate. It functions in the pathway glycan biosynthesis; glycogen biosynthesis. With respect to regulation, allosterically activated by fructose-1,6-bisphosphate (F16BP) and inhibited by AMP. Functionally, involved in the biosynthesis of ADP-glucose, a building block required for the elongation reactions to produce glycogen. Catalyzes the reaction between ATP and alpha-D-glucose 1-phosphate (G1P) to produce pyrophosphate and ADP-Glc. This chain is Glucose-1-phosphate adenylyltransferase, found in Enterobacter sp. (strain 638).